Here is a 343-residue protein sequence, read N- to C-terminus: Anthranilate phosphoribosyltransferase (343 aa).

5-phospho-alpha-D-ribose 1-diphosphate is bound by residues Gly81, 84 to 85, 91 to 94, 109 to 117, and Ser121; these read GD, NLST, and KHGNRSVSS. Position 81 (Gly81) interacts with anthranilate. Position 93 (Ser93) interacts with Mg(2+). Asn112 contributes to the anthranilate binding site. Position 167 (Arg167) interacts with anthranilate. Mg(2+)-binding residues include Asp226 and Glu227.

The protein belongs to the anthranilate phosphoribosyltransferase family. Homodimer. It depends on Mg(2+) as a cofactor.

The catalysed reaction is N-(5-phospho-beta-D-ribosyl)anthranilate + diphosphate = 5-phospho-alpha-D-ribose 1-diphosphate + anthranilate. The protein operates within amino-acid biosynthesis; L-tryptophan biosynthesis; L-tryptophan from chorismate: step 2/5. Catalyzes the transfer of the phosphoribosyl group of 5-phosphorylribose-1-pyrophosphate (PRPP) to anthranilate to yield N-(5'-phosphoribosyl)-anthranilate (PRA). The polypeptide is Anthranilate phosphoribosyltransferase (Cellvibrio japonicus (strain Ueda107) (Pseudomonas fluorescens subsp. cellulosa)).